The following is a 416-amino-acid chain: Exodeoxyribonuclease 7 large subunit (416 aa).

The interval 1–21 (MTEPDSKPKKGRAGRKKAEPV) is disordered.

It belongs to the XseA family. In terms of assembly, heterooligomer composed of large and small subunits.

The protein resides in the cytoplasm. The enzyme catalyses Exonucleolytic cleavage in either 5'- to 3'- or 3'- to 5'-direction to yield nucleoside 5'-phosphates.. Functionally, bidirectionally degrades single-stranded DNA into large acid-insoluble oligonucleotides, which are then degraded further into small acid-soluble oligonucleotides. The chain is Exodeoxyribonuclease 7 large subunit from Deinococcus radiodurans (strain ATCC 13939 / DSM 20539 / JCM 16871 / CCUG 27074 / LMG 4051 / NBRC 15346 / NCIMB 9279 / VKM B-1422 / R1).